Consider the following 327-residue polypeptide: Methionyl-tRNA formyltransferase (327 aa).

(6S)-5,6,7,8-tetrahydrofolate is bound at residue 121 to 124 (SLLP).

The protein belongs to the Fmt family.

The catalysed reaction is L-methionyl-tRNA(fMet) + (6R)-10-formyltetrahydrofolate = N-formyl-L-methionyl-tRNA(fMet) + (6S)-5,6,7,8-tetrahydrofolate + H(+). In terms of biological role, attaches a formyl group to the free amino group of methionyl-tRNA(fMet). The formyl group appears to play a dual role in the initiator identity of N-formylmethionyl-tRNA by promoting its recognition by IF2 and preventing the misappropriation of this tRNA by the elongation apparatus. This is Methionyl-tRNA formyltransferase from Burkholderia mallei (strain ATCC 23344).